A 453-amino-acid chain; its full sequence is tRNA-2-methylthio-N(6)-dimethylallyladenosine synthase (453 aa).

The region spanning 17–135 (GTFFIETWGC…FPEYLNRAKQ (119 aa)) is the MTTase N-terminal domain. Residues cysteine 26, cysteine 62, cysteine 96, cysteine 172, cysteine 176, and cysteine 179 each coordinate [4Fe-4S] cluster. Positions 158 to 388 (RKSSTKAFVT…VEVVNKSCEK (231 aa)) constitute a Radical SAM core domain. Positions 391 to 453 (KKYQDRIVKV…LSFSLEGEEV (63 aa)) constitute a TRAM domain.

The protein belongs to the methylthiotransferase family. MiaB subfamily. As to quaternary structure, monomer. Requires [4Fe-4S] cluster as cofactor.

It is found in the cytoplasm. The catalysed reaction is N(6)-dimethylallyladenosine(37) in tRNA + (sulfur carrier)-SH + AH2 + 2 S-adenosyl-L-methionine = 2-methylsulfanyl-N(6)-dimethylallyladenosine(37) in tRNA + (sulfur carrier)-H + 5'-deoxyadenosine + L-methionine + A + S-adenosyl-L-homocysteine + 2 H(+). Functionally, catalyzes the methylthiolation of N6-(dimethylallyl)adenosine (i(6)A), leading to the formation of 2-methylthio-N6-(dimethylallyl)adenosine (ms(2)i(6)A) at position 37 in tRNAs that read codons beginning with uridine. The chain is tRNA-2-methylthio-N(6)-dimethylallyladenosine synthase from Clostridium tetani (strain Massachusetts / E88).